A 167-amino-acid polypeptide reads, in one-letter code: DNA-directed RNA polymerase 19 kDa subunit (167 aa).

The disordered stretch occupies residues 15–41 (DNDYKSYDEDDDSISDIGETSDDCCTT). A compositionally biased stretch (acidic residues) spans 22–36 (DEDDDSISDIGETSD).

This sequence belongs to the poxviridae DNA-directed RNA polymerase 19 kDa subunit family. As to quaternary structure, the DNA-dependent RNA polymerase used for intermediate and late genes expression consists of eight subunits (147) kDa, 133 kDa, 35 kDa, 30 kDa, 22 kDa, 19 kDa, 18 kDa and 7 kDa totalling more than 500 kDa in mass. The same holoenzyme, with the addition of the transcription-specificity factor RAP94, is used for early gene expression.

Its subcellular location is the virion. It carries out the reaction RNA(n) + a ribonucleoside 5'-triphosphate = RNA(n+1) + diphosphate. Functionally, part of the DNA-dependent RNA polymerase which catalyzes the transcription of viral DNA into RNA using the four ribonucleoside triphosphates as substrates. Responsible for the transcription of early, intermediate and late genes. DNA-dependent RNA polymerase associates with the early transcription factor (ETF) thereby allowing the early genes transcription. Late transcription, and probably also intermediate transcription, require newly synthesized RNA polymerase. This Vertebrata (FPV) protein is DNA-directed RNA polymerase 19 kDa subunit (RPO19).